A 1072-amino-acid polypeptide reads, in one-letter code: Error-prone DNA polymerase (1072 aa).

The protein belongs to the DNA polymerase type-C family. DnaE2 subfamily.

The protein localises to the cytoplasm. It catalyses the reaction DNA(n) + a 2'-deoxyribonucleoside 5'-triphosphate = DNA(n+1) + diphosphate. DNA polymerase involved in damage-induced mutagenesis and translesion synthesis (TLS). It is not the major replicative DNA polymerase. This Burkholderia pseudomallei (strain K96243) protein is Error-prone DNA polymerase.